The sequence spans 404 residues: MQCEEKPVTERVVLAYSGGLDTSVAIGWIAEETGAEVIAVAVDVGQGGEDLDVIRKRALACGAVEAEVADAKDEFADEYCLPAVKANALYMDRYPLVSALSRPTIVKHLVAAAQKHGATTVAHGCTGKGNDQVRFEAGIVALAPGLKCIAPVRDYAMTRDKAIAFCEEKRLPIATTKKSPYSIDQNVFGRAVETGFLEDIWNAPIEDIYEYTSNPAEPREADEVVISFKEGVPVAIDGRPVTVLQAIQQLNERAGAQGVGRIDMVEDRLVGIKSREVYEAPGAIALITAHQELENVTVERELARYKRQVEQRWGELVYDGQWFSPLKRALEGFIDEANQHVNGDIRMTLHGGRAVVTGRRSETSLYDFNLATYDTGDSFDQAAAKGFIDIYSLSSKIAAKRDLA.

ATP is bound at residue 15–23 (AYSGGLDTS). Tyrosine 94 serves as a coordination point for L-citrulline. Glycine 124 provides a ligand contact to ATP. Positions 126, 130, and 131 each coordinate L-aspartate. Asparagine 130 provides a ligand contact to L-citrulline. 4 residues coordinate L-citrulline: arginine 134, serine 182, glutamate 266, and tyrosine 278.

It belongs to the argininosuccinate synthase family. Type 1 subfamily. Homotetramer.

The protein resides in the cytoplasm. The enzyme catalyses L-citrulline + L-aspartate + ATP = 2-(N(omega)-L-arginino)succinate + AMP + diphosphate + H(+). It participates in amino-acid biosynthesis; L-arginine biosynthesis; L-arginine from L-ornithine and carbamoyl phosphate: step 2/3. The sequence is that of Argininosuccinate synthase from Streptomyces avermitilis (strain ATCC 31267 / DSM 46492 / JCM 5070 / NBRC 14893 / NCIMB 12804 / NRRL 8165 / MA-4680).